A 364-amino-acid polypeptide reads, in one-letter code: Selection and upkeep of intraepithelial T-cells protein 11 (364 aa).

Residues 1 to 28 (MEPSASCLPGFFMVCILLKITVLTQVMS) form the signal peptide. The 90-residue stretch at 29–118 (LDIQINTQIP…TNQEKRRSII (90 aa)) folds into the Ig-like V-type domain. Residues 29 to 138 (LDIQINTQIP…MSLMSNNLLY (110 aa)) lie on the Extracellular side of the membrane. The cysteines at positions 48 and 102 are disulfide-linked. A helical membrane pass occupies residues 139 to 159 (LGIYLIFILFLNFLKGILFCL). Over 160-186 (TKRLVHFRKRMIKIKKVWSNKTRACCP) the chain is Cytoplasmic. The helical transmembrane segment at 187–207 (LIWEFLEIVLFIAFLPLYLMF) threads the bilayer. Over 208–230 (RIRVFTLDEAHILYNNWLWKVCK) the chain is Extracellular. Residues 231-251 (TLIAMMILFTVLILFLLWTLN) form a helical membrane-spanning segment. Residues 252–364 (RYGKMPCLSS…LYSKLGNLTH (113 aa)) lie on the Cytoplasmic side of the membrane.

It belongs to the SKINT family. In terms of tissue distribution, expressed in skin and thymus.

The protein localises to the membrane. Its function is as follows. May act by engaging a cell surface molecule on immature T-cells in the embryonic thymus. In Mus musculus (Mouse), this protein is Selection and upkeep of intraepithelial T-cells protein 11 (Skint11).